The primary structure comprises 449 residues: Delta(8)-fatty-acid desaturase 1 (449 aa).

The region spanning 7-91 (KKYITNEDLK…IRDFQVSEVS (85 aa)) is the Cytochrome b5 heme-binding domain. His-42 and His-65 together coordinate heme. 2 helical membrane-spanning segments follow: residues 113 to 133 (VTLYTLAFVAAMFLGVLYGVL) and 138 to 158 (VFAHQIAAALLGLLWIQSAYI). The Histidine box-1 signature appears at 160–164 (HDSGH). Residues 173–195 (YNRFAQLLSGNCLTGISIAWWKW) form a helical membrane-spanning segment. The Histidine box-2 signature appears at 197–201 (HNAHH). 3 helical membrane-spanning segments follow: residues 255-275 (YYPVMCFGRINLFIQTFLLLF), 284-304 (ALNFAGILVFWTWFPLLVSCL), and 311-331 (FFFVFTSFTVTALQHIQFTLN). Residues 374 to 378 (QLEHH) carry the Histidine box-3 motif.

Belongs to the fatty acid desaturase type 1 family. It depends on Fe cation as a cofactor. In terms of tissue distribution, highly expressed in flowers. Expressed in roots, leaves, stems and siliques.

It localises to the endoplasmic reticulum membrane. It carries out the reaction an N-acyl-(4R)-4-hydroxysphinganine + 2 Fe(II)-[cytochrome b5] + O2 + 2 H(+) = a (4R,8E)-4-hydroxysphingenine ceramide + 2 Fe(III)-[cytochrome b5] + 2 H2O. It catalyses the reaction an N-acyl-(4R)-4-hydroxysphinganine + 2 Fe(II)-[cytochrome b5] + O2 + 2 H(+) = a (4R,8Z)-4-hydroxysphing-8-enine ceramide + 2 Fe(III)-[cytochrome b5] + 2 H2O. In terms of biological role, plays a major role as delta(8)-fatty-acid desaturase which introduces a double bond at the 8-position in the long-chain base (LCB) of ceramides with or without a hydroxy group at the 4-position. The enzyme produces both the 8E and 8Z isomers (in a 4:1 ratio). This structural modification contributes to the quantitative partitioning of ceramides between the two major sphingolipid classes, glucosylceramides and glycosylinositolphosphoryl ceramides. Sphingolipids are important membrane components involved in environmental stress responses, such as resistance to chilling, and act as cell signaling molecules. This Arabidopsis thaliana (Mouse-ear cress) protein is Delta(8)-fatty-acid desaturase 1 (SLD1).